A 118-amino-acid polypeptide reads, in one-letter code: UPF0148 protein LS215_1455 (118 aa).

It belongs to the UPF0148 family.

This is UPF0148 protein LS215_1455 from Saccharolobus islandicus (strain L.S.2.15 / Lassen #1) (Sulfolobus islandicus).